The sequence spans 608 residues: Microtubule-associated protein 70-3 (608 aa).

The tract at residues 1 to 23 is disordered; it reads MADGVEEGNAVAPRGPARRRGTV. Residues 40–346 adopt a coiled-coil conformation; sequence DPVRVELTRL…ARSEAQLKEK (307 aa). The required for targeting to microtubules stretch occupies residues 224–458; that stretch reads ILDKLQRQKV…HLLNRSTDAV (235 aa). Disordered stretches follow at residues 354-493 and 570-608; these read LEDG…TANN and DKEQEVKARRLGSSKGTGSSQVLSGSRSSSRSGLTRNYQ. The span at 363–379 shows a compositional bias: polar residues; it reads SGSSRLPTEGKSFSNGP. Residues 402–421 show a composition bias toward low complexity; sequence RRSPSFHSRSSLSSSSSLVL. The span at 476–493 shows a compositional bias: polar residues; it reads IENTNSNTDESNKETANN. Residues 542 to 576 are a coiled coil; it reads LTKAMEVEAKKMRREVAAMEKEVAAMRVDKEQEVK. Over residues 586–608 the composition is skewed to low complexity; the sequence is TGSSQVLSGSRSSSRSGLTRNYQ.

The protein belongs to the MAP70 family.

The protein resides in the cytoplasm. It localises to the cytoskeleton. Its function is as follows. Plant-specific protein that interact with microtubules. The chain is Microtubule-associated protein 70-3 (MAP70.3) from Oryza sativa subsp. japonica (Rice).